Consider the following 1088-residue polypeptide: RNA-directed RNA polymerase (1088 aa).

Residues 501-687 form the RdRp catalytic domain; that stretch reads LSYGDVTRFL…AKRYIAGGKI (187 aa).

It belongs to the reoviridae RNA-directed RNA polymerase family. In terms of assembly, interacts with VP3 (Potential). Interacts with VP2; this interaction activates VP1. Interacts with NSP5; this interaction is probably necessary for the formation of functional virus factories. Interacts with NSP2; this interaction is weak. Mg(2+) is required as a cofactor.

It localises to the virion. It catalyses the reaction RNA(n) + a ribonucleoside 5'-triphosphate = RNA(n+1) + diphosphate. RNA-directed RNA polymerase that is involved in both transcription and genome replication. Together with VP3 capping enzyme, forms an enzyme complex positioned near the channels situated at each of the five-fold vertices of the core. Following infection, the outermost layer of the virus is lost, leaving a double-layered particle (DLP) made up of the core and VP6 shell. VP1 then catalyzes the transcription of fully conservative plus-strand genomic RNAs that are extruded through the DLP's channels into the cytoplasm where they function as mRNAs for translation of viral proteins. One copy of each of the viral (+)RNAs is also recruited during core assembly, together with newly synthesized polymerase complexes and VP2. The polymerase of these novo-formed particles catalyzes the synthesis of complementary minus-strands leading to dsRNA formation. To do so, the polymerase specifically recognizes and binds 4 bases 5'-UGUG-3' in the conserved 3'-sequence of plus-strand RNA templates. VP2 presumably activates the autoinhibited VP1-RNA complex to coordinate packaging and genome replication. Once dsRNA synthesis is complete, the polymerase switches to the transcriptional mode, thus providing secondary transcription. This is RNA-directed RNA polymerase from Rotavirus A (strain RVA/Human/United States/Wa/1974/G1P1A[8]) (RV-A).